Consider the following 727-residue polypeptide: Ankyrin repeat domain-containing protein 6 (727 aa).

ANK repeat units lie at residues 9 to 38 (ALSERLLVAAYKGQTENVVQLINKGARVAV), 41 to 70 (HGRTPLHLAANKGHLPVVQILLKAGCDLDV), 74 to 103 (GDQTALHRATVVGNTEIIAALIHEGCALDR), 107 to 136 (DGNTALHEASWHGFSQSAKLLIKAGANVLA), 140 to 169 (AGNTALHLACQNSHSQSTRVLLLAGSRADL), 173 to 202 (AGDTCLHVAARYNHLSIIRLLLTAFCSVHE), 206 to 235 (AGDTALHVAAALNHKKVAKILLEAGADTTI), and 239 to 268 (AGQTPLETARYHNNPEVALLLTKAPQVLRF). The segment at 277–386 (KRERLKEERR…HRCSSPPPPH (110 aa)) is disordered. Residues 280-296 (RLKEERRAQSVPRDEVA) show a composition bias toward basic and acidic residues. The span at 298–312 (SKGSVSAGDTPSSEQ) shows a compositional bias: polar residues. Residues 314–324 (VARKEEAREEF) show a composition bias toward basic and acidic residues. Positions 363–379 (KNLHAHNHPKKRNRHRC) are enriched in basic residues. Positions 417-446 (LINKLENQLEATVEEIKAELGSVQDKMNTK) form a coiled coil. The span at 548–557 (PAAASDSSPP) shows a compositional bias: low complexity. Disordered stretches follow at residues 548–586 (PAAASDSSPPVVRPKEKALNSTATQRLQQELSSSDCTGS) and 601–657 (NEAA…TGPH). The segment covering 566–584 (LNSTATQRLQQELSSSDCT) has biased composition (polar residues). Basic residues predominate over residues 622-633 (KSGKSGPTRHRA). Positions 682 to 727 (WYERKIEEARSQANQKAQQDKATLKEHIKSLEEELAKLRTRVQKEN) form a coiled coil.

In terms of assembly, interacts with AXN1, AXN2 and CSNK1E/CKI-epsilon.

In terms of biological role, recruits CKI-epsilon to the beta-catenin degradation complex that consists of AXN1 or AXN2 and GSK3-beta and allows efficient phosphorylation of beta-catenin, thereby inhibiting beta-catenin/Tcf signals. The chain is Ankyrin repeat domain-containing protein 6 (ANKRD6) from Homo sapiens (Human).